The chain runs to 218 residues: MVQKVVVIFSGGMDSFTVLNMAVKEGYEVHALSFNYGQRHSKELDYASRACITLGVAHKIIDISAINELIGGSSLTSDVDIPEGHYAEESMKSTVVPNRNMILLSMAVGYAVSLDANKVYYGAHSGDHDIYPDCRPEFVERMNDVCAIANYEKVEIVSPFLYQSKIDILTAGLNMGLDYNLTWTCYNGREKACGKCGACQERLEAFDKNNAQDPLEYE.

9-19 (FSGGMDSFTVL) lines the ATP pocket. Zn(2+)-binding residues include C185, C193, C196, and C199.

This sequence belongs to the QueC family. Requires Zn(2+) as cofactor.

It carries out the reaction 7-carboxy-7-deazaguanine + NH4(+) + ATP = 7-cyano-7-deazaguanine + ADP + phosphate + H2O + H(+). Its pathway is purine metabolism; 7-cyano-7-deazaguanine biosynthesis. Its function is as follows. Catalyzes the ATP-dependent conversion of 7-carboxy-7-deazaguanine (CDG) to 7-cyano-7-deazaguanine (preQ(0)). The polypeptide is 7-cyano-7-deazaguanine synthase (Pseudoalteromonas atlantica (strain T6c / ATCC BAA-1087)).